The sequence spans 293 residues: Nucleotide-binding protein BCQ_4976 (293 aa).

14–21 (GMSGAGKT) contributes to the ATP binding site. 65 to 68 (DLRG) provides a ligand contact to GTP.

The protein belongs to the RapZ-like family.

In terms of biological role, displays ATPase and GTPase activities. In Bacillus cereus (strain Q1), this protein is Nucleotide-binding protein BCQ_4976.